The sequence spans 395 residues: Thyroid hormone receptor beta (395 aa).

The modulating stretch occupies residues 1–31 (MSEPAENCSPRWKDEAIQNGYIPSYLDKDEL). 8 residues coordinate Zn(2+): Cys-32, Cys-35, Cys-49, Cys-52, Cys-70, Cys-76, Cys-86, and Cys-89. NR C4-type zinc fingers lie at residues 32–52 (CVVCGDKATGYHYRCITCEGC) and 70–94 (CKYEGKCVIDKVTRNQCQECRFKKC). A DNA-binding region (nuclear receptor) is located at residues 32 to 99 (CVVCGDKATG…RFKKCIAVGM (68 aa)). The NR LBD domain maps to 142 to 395 (EEWDLIRMVT…PPLFLEVFED (254 aa)). 3,3',5-triiodo-L-thyronine-binding residues include Arg-216, Asn-265, and His-369. Positions 216, 265, and 369 each coordinate L-thyroxine.

This sequence belongs to the nuclear hormone receptor family. NR1 subfamily.

It is found in the nucleus. Nuclear hormone receptor that can act as a repressor or activator of transcription. High affinity receptor for thyroid hormones, including triiodothyronine and thyroxine. This Paralichthys olivaceus (Bastard halibut) protein is Thyroid hormone receptor beta (thrb).